We begin with the raw amino-acid sequence, 239 residues long: Calcium-activated potassium channel subunit beta-3 (239 aa).

The Cytoplasmic portion of the chain corresponds to Met-1–Thr-51. The segment at Gly-15–His-38 is disordered. A helical membrane pass occupies residues Leu-52–Val-72. At Leu-73 to Lys-197 the chain is on the extracellular side. N-linked (GlcNAc...) asparagine glycans are attached at residues Asn-86, Asn-123, and Asn-174. Residues Val-198–Gly-218 traverse the membrane as a helical segment. The Cytoplasmic portion of the chain corresponds to Leu-219–Ala-239.

It belongs to the KCNMB (TC 8.A.14.1) family. KCNMB3 subfamily. As to quaternary structure, interacts with KCNMA1 tetramer. There are probably 4 molecules of KCMNB3 per KCNMA1 tetramer. Post-translationally, N-glycosylated. The extracellular domain contains disulfide bond essential for the gating mechanism.

It localises to the membrane. Regulatory subunit of the calcium activated potassium KCNMA1 (maxiK) channel. Modulates the calcium sensitivity and gating kinetics of KCNMA1, thereby contributing to KCNMA1 channel diversity. Alters the functional properties of the current expressed by the KCNMA1 channel. May partially inactivate the current of KCNBMA. Two or more subunits of KCNMB3 are required to block the KCNMA1 tetramer. The sequence is that of Calcium-activated potassium channel subunit beta-3 from Rattus norvegicus (Rat).